Here is a 548-residue protein sequence, read N- to C-terminus: Chaperonin GroEL (548 aa).

ATP-binding positions include 30 to 33 (TLGP), Lys-51, 87 to 91 (DGTTT), Gly-415, 479 to 481 (NAA), and Asp-495. The tract at residues 524 to 548 (LPKEDKSSDSSSSPAGGMGGMGGMM) is disordered. Positions 539–548 (GGMGGMGGMM) are enriched in gly residues.

The protein belongs to the chaperonin (HSP60) family. Forms a cylinder of 14 subunits composed of two heptameric rings stacked back-to-back. Interacts with the co-chaperonin GroES.

The protein localises to the cytoplasm. It catalyses the reaction ATP + H2O + a folded polypeptide = ADP + phosphate + an unfolded polypeptide.. In terms of biological role, together with its co-chaperonin GroES, plays an essential role in assisting protein folding. The GroEL-GroES system forms a nano-cage that allows encapsulation of the non-native substrate proteins and provides a physical environment optimized to promote and accelerate protein folding. The sequence is that of Chaperonin GroEL from Buchnera aphidicola subsp. Acyrthosiphon pisum (strain 5A).